The chain runs to 203 residues: MKKLILIGCLMAGMNINVAWANASQNLQERLGKVNSFHASFTQTVTSDDGATIQEGEGQLWVKRPNLFNWHMTSPDESVLVSDGKTLWFYNPFVEQVTANWLKDATGNTPFMLITRNDAKEWSQYKISQQGNDFELTPNNVTGNLKRFSITVTTDGTIQKFSAIEQDGQKSAYQLKGQQNTHVDAAKFSFTLPKGVTLDDQRQ.

Residues M1–A21 form the signal peptide.

Belongs to the LolA family. Monomer.

The protein localises to the periplasm. Participates in the translocation of lipoproteins from the inner membrane to the outer membrane. Only forms a complex with a lipoprotein if the residue after the N-terminal Cys is not an aspartate (The Asp acts as a targeting signal to indicate that the lipoprotein should stay in the inner membrane). The polypeptide is Outer-membrane lipoprotein carrier protein (Photorhabdus laumondii subsp. laumondii (strain DSM 15139 / CIP 105565 / TT01) (Photorhabdus luminescens subsp. laumondii)).